We begin with the raw amino-acid sequence, 733 residues long: LMBR1 domain-containing protein 2 homolog A (733 aa).

5 helical membrane-spanning segments follow: residues 1–21 (MIVIFIFILIAVGLLSTKILH), 33–53 (VYISVWIGWFMCFSIVILVPI), 125–145 (FYFGTLLLTWLVYPLMGSFVL), 163–183 (AYLYLIFGVIGLVVMIWLLAV), and 191–211 (MVGFAMAAANTWGLCLVIILM). Positions 232–266 (LKHLQFKAVELLNSKKKANEELIATMKVIRRIQEK) form a coiled coil. Transmembrane regions (helical) follow at residues 386–406 (AAIVFAVLSLLIIWSEFALAF), 423–443 (VSNIFVQFILFFPLGYEALTC), 468–488 (SIIFSAAYLCRLGAPLCYNFI), and 513–533 (VAPFLGTYFYIYFPLLIVIVC). 3 disordered regions span residues 581–641 (NNIK…TSSA), 649–668 (LKKSSNNNNNNNNNNNPYEQ), and 674–696 (ESNDFDDDDDIESGGAGRPTYNA). A compositionally biased stretch (polar residues) spans 596-619 (DSTSNNPKQIFKSGSTTISKQSPP). Composition is skewed to low complexity over residues 620–640 (NLNVSGGNINNNNTNNGNTSS) and 654–664 (NNNNNNNNNNN). The segment covering 674–685 (ESNDFDDDDDIE) has biased composition (acidic residues).

The protein belongs to the LIMR family.

The protein localises to the membrane. This is LMBR1 domain-containing protein 2 homolog A from Dictyostelium discoideum (Social amoeba).